We begin with the raw amino-acid sequence, 363 residues long: Adenosine deaminase (363 aa).

Positions 42 and 44 each coordinate Zn(2+). A purine D-ribonucleoside contacts are provided by residues 44–46, aspartate 172, and glycine 201; that span reads HLD. Residues 170–184 are gating helix loop; regulates binding affinity for substrates and thus substrate selectivity; that stretch reads IGDTGHEAANIKASA. Histidine 226 is a Zn(2+) binding site. Residues glutamate 229, histidine 253, and aspartate 310 each coordinate a purine D-ribonucleoside. Residue aspartate 310 participates in Zn(2+) binding.

The protein belongs to the metallo-dependent hydrolases superfamily. Adenosine and AMP deaminases family. Requires Zn(2+) as cofactor.

It carries out the reaction adenosine + H2O + H(+) = inosine + NH4(+). It catalyses the reaction S-methyl-5'-thioadenosine + H2O + H(+) = S-methyl-5'-thioinosine + NH4(+). It functions in the pathway purine metabolism; purine nucleoside salvage. With respect to regulation, inhibited by coformycin and methylthiocoformycin (MT-coformycin). In terms of biological role, catalyzes the hydrolytic deamination of adenosine to produce inosine. Unlike mammalian adenosine deaminases, also catalyzes the deamination of 5'-methylthioadenosine (MTA), a by-product of polyamine biosynthesis, to produce 5'-methylthioinosine (MTI). Plays an essential role in the purine salvage pathway which allows the parasite to use host cell purines for the synthesis of nucleic acids. This Plasmodium cynomolgi (strain B) protein is Adenosine deaminase.